A 498-amino-acid chain; its full sequence is GPI mannosyltransferase 4 (498 aa).

A run of 9 helical transmembrane segments spans residues 4–24 (AVIRYIWLLVALLVALEPAYV), 60–80 (FAPLWIFMGPALVAARLFNAG), 118–134 (AFLLSTTYVVGAFQSHT), 135–155 (FSNSIETLLAVAAVGLLEVVI), 169–189 (GVLGFLIALGLFNRVTFAGYL), 208–228 (LAALLLCFLLTSGACIWIDTL), 261–281 (YTHILVNLPMLLGPGLLFALG), 286–303 (LSLPLLSCVSGVATLSLF), and 332–352 (LTLTLKLWLAFNGLMVVIMGV). N429 carries N-linked (GlcNAc...) asparagine glycosylation.

The protein belongs to the glycosyltransferase 22 family. PIGZ subfamily.

It localises to the endoplasmic reticulum membrane. Its pathway is glycolipid biosynthesis; glycosylphosphatidylinositol-anchor biosynthesis. Alpha-1,2-mannosyltransferase involved in glycosylphosphatidylinositol-anchor biosynthesis. Transfers a fourth mannose to trimannosyl-GPIs during GPI precursor assembly. The presence of a fourth mannose in GPI is essential in fungi. The chain is GPI mannosyltransferase 4 (SMP3) from Eremothecium gossypii (strain ATCC 10895 / CBS 109.51 / FGSC 9923 / NRRL Y-1056) (Yeast).